Consider the following 459-residue polypeptide: Cysteine desulfurase (459 aa).

Residues Met1 to Arg17 constitute a mitochondrion transit peptide. Pyridoxal 5'-phosphate contacts are provided by Ala129, Thr130, Gln237, Ser257, and His259. Residue Lys260 is modified to N6-(pyridoxal phosphate)lysine. Pyridoxal 5'-phosphate is bound at residue Thr297. The active-site Cysteine persulfide intermediate is Cys383. Cys383 is a [2Fe-2S] cluster binding site. A Zn(2+)-binding site is contributed by Cys383. At Cys383 the chain carries Cysteine persulfide.

This sequence belongs to the class-V pyridoxal-phosphate-dependent aminotransferase family. NifS/IscS subfamily. In terms of assembly, homodimer. Component of the mitochondrial core iron-sulfur cluster (ISC) complex composed of NFS1, LYRM4, NDUFAB1, ISCU, FXN, and FDX2; this complex is a heterohexamer containing two copies of each monomer. Component of cyteine desulfurase complex composed of NFS1, LYRM4 and NDUFAB1; this complex contributes to the activation of cysteine desulfurase activity and NFS1 stabilization. Interacts (homodimer form) with ISCU (D-state); each monomer interacts with the C-terminal regions of each NFS1 monomer. Interacts with HSPA9. Interacts (via homodimer form) with FDX2. Interacts (via homodimer form) with FXN. Interacts with LYRM4. Component of a complex composed of FXN, NFS1, LYRM4 and ISCU. Requires pyridoxal 5'-phosphate as cofactor. N-gluconoylated. Post-translationally, cysteine persulfide intermediate is reduced by thiol-containing molecules like glutathione and L-cysteine. Persulfide reduction is a rate-limiting step of cysteine desulfurase catalytic cycle. Ubiquitous.

The protein localises to the mitochondrion. The catalysed reaction is (sulfur carrier)-H + L-cysteine = (sulfur carrier)-SH + L-alanine. It carries out the reaction L-cysteinyl-[cysteine desulfurase] + L-cysteine = S-sulfanyl-L-cysteinyl-[cysteine desulfurase] + L-alanine. With respect to regulation, active only in complex with LYRM4. Functionally, mitochondrial cysteine desulfurase, of the core iron-sulfur cluster (ISC) assembly complex, that catalyzes the desulfuration of L-cysteine to L-alanine, as component of the cysteine desulfurase complex, leading to the formation of a cysteine persulfide intermediate at the active site cysteine residue and participates in the [2Fe-2S] clusters assembly on the scaffolding protein ISCU. The persulfide is then transferred on the flexible Cys loop from the catalytic site of NFS1 to the surface of NFS1. After the NFS1-linked persulfide sulfur is transferred to one of the conserved Cys residues of the scaffold, a reaction assisted by FXN. The core iron-sulfur cluster (ISC) assembly complex is involved in the de novo synthesis of a [2Fe-2S] cluster, the first step of the mitochondrial iron-sulfur protein biogenesis. This process is initiated by the cysteine desulfurase complex (NFS1:LYRM4:NDUFAB1) that produces persulfide which is delivered on the scaffold protein ISCU in a FXN-dependent manner. Then this complex is stabilized by FDX2 which provides reducing equivalents to accomplish the [2Fe-2S] cluster assembly. Finally, the [2Fe-2S] cluster is transferred from ISCU to chaperone proteins, including HSCB, HSPA9 and GLRX5. This chain is Cysteine desulfurase, found in Mus musculus (Mouse).